The following is a 73-amino-acid chain: Sec-independent protein translocase protein TatA (73 aa).

The helical transmembrane segment at 1 to 21 threads the bilayer; sequence MGSFSIWHWLIVLVIVMLVFG. The disordered stretch occupies residues 44-73; the sequence is KSAEDPNEQIPQSTTTAEKTVDVQAKDINK. Polar residues predominate over residues 52 to 61; sequence QIPQSTTTAE. Basic and acidic residues predominate over residues 62–73; sequence KTVDVQAKDINK.

It belongs to the TatA/E family. The Tat system comprises two distinct complexes: a TatABC complex, containing multiple copies of TatA, TatB and TatC subunits, and a separate TatA complex, containing only TatA subunits. Substrates initially bind to the TatABC complex, which probably triggers association of the separate TatA complex to form the active translocon.

It localises to the cell inner membrane. Functionally, part of the twin-arginine translocation (Tat) system that transports large folded proteins containing a characteristic twin-arginine motif in their signal peptide across membranes. TatA could form the protein-conducting channel of the Tat system. The sequence is that of Sec-independent protein translocase protein TatA from Polynucleobacter asymbioticus (strain DSM 18221 / CIP 109841 / QLW-P1DMWA-1) (Polynucleobacter necessarius subsp. asymbioticus).